Reading from the N-terminus, the 673-residue chain is Protein transport Sec1a (673 aa).

The segment at 538–591 is disordered; the sequence is SSHKEESEARTGSVRKSSAPTAVPERKATPHSMRSRRTATWARPHSSDDGYSSD.

The protein belongs to the STXBP/unc-18/SEC1 family. Does not bind the syntaxin KNOLLE.

Functionally, involved in the vesicle trafficking. Binds syntaxins. The protein is Protein transport Sec1a (SEC1A) of Arabidopsis thaliana (Mouse-ear cress).